The sequence spans 354 residues: UDP-N-acetylglucosamine--N-acetylmuramyl-(pentapeptide) pyrophosphoryl-undecaprenol N-acetylglucosamine transferase (354 aa).

Residues 15 to 17 (TGG), N127, R163, S191, I244, 263 to 268 (ALTVSE), and Q288 each bind UDP-N-acetyl-alpha-D-glucosamine.

It belongs to the glycosyltransferase 28 family. MurG subfamily.

It is found in the cell inner membrane. It catalyses the reaction di-trans,octa-cis-undecaprenyl diphospho-N-acetyl-alpha-D-muramoyl-L-alanyl-D-glutamyl-meso-2,6-diaminopimeloyl-D-alanyl-D-alanine + UDP-N-acetyl-alpha-D-glucosamine = di-trans,octa-cis-undecaprenyl diphospho-[N-acetyl-alpha-D-glucosaminyl-(1-&gt;4)]-N-acetyl-alpha-D-muramoyl-L-alanyl-D-glutamyl-meso-2,6-diaminopimeloyl-D-alanyl-D-alanine + UDP + H(+). It participates in cell wall biogenesis; peptidoglycan biosynthesis. Functionally, cell wall formation. Catalyzes the transfer of a GlcNAc subunit on undecaprenyl-pyrophosphoryl-MurNAc-pentapeptide (lipid intermediate I) to form undecaprenyl-pyrophosphoryl-MurNAc-(pentapeptide)GlcNAc (lipid intermediate II). This chain is UDP-N-acetylglucosamine--N-acetylmuramyl-(pentapeptide) pyrophosphoryl-undecaprenol N-acetylglucosamine transferase, found in Aliivibrio fischeri (strain MJ11) (Vibrio fischeri).